The chain runs to 669 residues: Elongation factor G 2 (669 aa).

In terms of domain architecture, tr-type G spans Met1–Phe276. GTP-binding positions include Ala10–Thr17, Asp74–His78, and Asn128–Asp131.

The protein belongs to the TRAFAC class translation factor GTPase superfamily. Classic translation factor GTPase family. EF-G/EF-2 subfamily.

It is found in the cytoplasm. In terms of biological role, catalyzes the GTP-dependent ribosomal translocation step during translation elongation. During this step, the ribosome changes from the pre-translocational (PRE) to the post-translocational (POST) state as the newly formed A-site-bound peptidyl-tRNA and P-site-bound deacylated tRNA move to the P and E sites, respectively. Catalyzes the coordinated movement of the two tRNA molecules, the mRNA and conformational changes in the ribosome. In Borreliella afzelii (strain PKo) (Borrelia afzelii), this protein is Elongation factor G 2 (fusA2).